A 1240-amino-acid polypeptide reads, in one-letter code: Phospholipid-transporting ATPase 6 (1240 aa).

The Cytoplasmic segment spans residues 1 to 75 (MARRRIRSRI…TTRYNLLTFL (75 aa)). A helical membrane pass occupies residues 76 to 97 (PKCLYEQFHRVANFYFLVAAIL). The Extracellular portion of the chain corresponds to 98 to 101 (SVFP). Residues 102 to 124 (LSPFNKWSMIAPLVFVVGLSMGK) form a helical membrane-spanning segment. Topologically, residues 125–306 (EALEDWRRFM…SRIEKRMDYI (182 aa)) are cytoplasmic. The chain crosses the membrane as a helical span at residues 307–328 (IYTLFALLLTVSFISSLGFAVM). Topologically, residues 329–360 (TKLLMAEWWYLRPDKPESLTNPTNPLYAWVVH) are extracellular. The chain crosses the membrane as a helical span at residues 361-378 (LITALLLYGYLIPISLYV). The Cytoplasmic portion of the chain corresponds to 379–943 (SIEVVKVLQA…HGHWCYKRIA (565 aa)). The active-site 4-aspartylphosphate intermediate is Asp-426. A Glycyl lysine isopeptide (Lys-Gly) (interchain with G-Cter in ubiquitin) cross-link involves residue Lys-625. Mg(2+) contacts are provided by Asp-888 and Asp-892. A helical transmembrane segment spans residues 944-963 (QMICYFFYKNITFGLTLFYF). Topologically, residues 964–977 (ECFTGFSGQSIYND) are extracellular. Residues 978–997 (SYLLLFNVVLTSLPVISLGV) form a helical membrane-spanning segment. At 998 to 1027 (FEQDVPSDVCLQFPALYQQGPKNLFFDWYR) the chain is on the cytoplasmic side. A helical membrane pass occupies residues 1028–1050 (ILGWMGNGVYASIVIFTLNLGIF). Topologically, residues 1051–1063 (HVQSFRSDGQTAD) are extracellular. A helical membrane pass occupies residues 1064–1086 (MNAMGTAMFTCIIWAVNVQIALT). Over 1087–1092 (MSHFTW) the chain is Cytoplasmic. Residues 1093–1113 (IQHVMIWGSIGAWYVFLALYG) form a helical membrane-spanning segment. Over 1114 to 1130 (MLPVKLSGNIFHMLVEI) the chain is Extracellular. Residues 1131 to 1155 (LAPAPIFWLTSLLVIAATTLPYLFH) traverse the membrane as a helical segment. The Cytoplasmic segment spans residues 1156–1240 (ISYQRSVNPL…SNDTPSSNSQ (85 aa)).

Belongs to the cation transport ATPase (P-type) (TC 3.A.3) family. Type IV subfamily.

The protein resides in the cell membrane. It is found in the endomembrane system. The catalysed reaction is ATP + H2O + phospholipidSide 1 = ADP + phosphate + phospholipidSide 2.. In terms of biological role, involved in transport of phospholipids and in regulation of pollen plasma membrane lipid asymmetry. The protein is Phospholipid-transporting ATPase 6 of Arabidopsis thaliana (Mouse-ear cress).